The sequence spans 437 residues: Trigger factor (437 aa).

A PPIase FKBP-type domain is found at 163–248 (DDRVTVDFEG…VKKIEASHLP (86 aa)).

This sequence belongs to the FKBP-type PPIase family. Tig subfamily.

The protein localises to the cytoplasm. It carries out the reaction [protein]-peptidylproline (omega=180) = [protein]-peptidylproline (omega=0). Its function is as follows. Involved in protein export. Acts as a chaperone by maintaining the newly synthesized protein in an open conformation. Functions as a peptidyl-prolyl cis-trans isomerase. The sequence is that of Trigger factor from Variovorax paradoxus (strain S110).